A 535-amino-acid polypeptide reads, in one-letter code: Berberine bridge enzyme-like 3 (535 aa).

Residues 1 to 19 (MKEALFGLYLVLLVSGLEA) form the signal peptide. The cysteines at positions 32 and 95 are disulfide-linked. The N-linked (GlcNAc...) asparagine glycan is linked to Asn-52. In terms of domain architecture, FAD-binding PCMH-type spans 73–247 (NNKNLLAIVV…LSWKINLVEV (175 aa)). The segment at residues 110–172 (HDNEGLSYVS…QTLAFPAGIC (63 aa)) is a cross-link (6-(S-cysteinyl)-8alpha-(pros-histidyl)-FAD (His-Cys)). N-linked (GlcNAc...) asparagine glycans are attached at residues Asn-214, Asn-257, Asn-292, Asn-321, Asn-341, Asn-415, Asn-439, and Asn-444.

Belongs to the oxygen-dependent FAD-linked oxidoreductase family. The cofactor is FAD. Post-translationally, the FAD cofactor is bound via a bicovalent 6-S-cysteinyl, 8alpha-N1-histidyl FAD linkage.

Its subcellular location is the endoplasmic reticulum. The protein localises to the cell membrane. It is found in the secreted. It localises to the cell wall. Flavin-dependent oxidoreductase involved in the biosynthetic pathway to 4-hydroxyindole-3-carbonyl nitrile (4-OH-ICN), a cyanogenic metabolite required for inducible pathogen defense. Converts indole cyanohydrin into indole-3-carbonyl nitrile (ICN). The protein is Berberine bridge enzyme-like 3 of Arabidopsis thaliana (Mouse-ear cress).